We begin with the raw amino-acid sequence, 95 residues long: DNA-directed RNA polymerase subunit Rpo11 (95 aa).

Belongs to the archaeal Rpo11/eukaryotic RPB11/RPC19 RNA polymerase subunit family. In terms of assembly, part of the RNA polymerase complex.

The protein localises to the cytoplasm. The catalysed reaction is RNA(n) + a ribonucleoside 5'-triphosphate = RNA(n+1) + diphosphate. Its function is as follows. DNA-dependent RNA polymerase (RNAP) catalyzes the transcription of DNA into RNA using the four ribonucleoside triphosphates as substrates. This is DNA-directed RNA polymerase subunit Rpo11 from Thermococcus onnurineus (strain NA1).